Consider the following 256-residue polypeptide: Matrix protein (256 aa).

Positions 1–110 (METYVNKLHE…KLAYDVTTPC (110 aa)) are interaction with M2-1. Positions 110-183 (CEIKACSLTC…LNTLENITTT (74 aa)) are nuclear targeting and binding to host importin KPNB1. A Nuclear export signal motif is present at residues 194-206 (IIPYSGLLLVITV). A Phosphothreonine; by host CK2 modification is found at T205.

The protein belongs to the pneumovirinae M protein family. As to quaternary structure, forms dimers. Forms higher-order oligomers. Interacts with glycoprotein G (via N-terminus). Interacts with protein M2-1; this interaction directs the matrix protein localization to cytoplasmic inclusions comprising viral proteins L, N, P, and M2-1 and mediates the matrix protein association with the nucleocapsid. Interacts with host importin KPNB1; this interaction mediates nuclear import of the matrix protein early during infection. Interacts with host AP3M1; this interaction plays an essential role in trafficking the matrix protein in host cells. Interacts with host CAV1; this interaction probably facilitates viral budding. Interacts with host CFL1; this interaction probably facilitates viral replication. Interacts with host ZNF502; this interaction probably facilitates viral release. Interacts with host RACK1. Post-translationally, phosphorylation is important for oligomerization.

It is found in the virion. The protein localises to the host cytoplasm. It localises to the host nucleus. Its subcellular location is the host cell membrane. Its function is as follows. Plays a crucial role in virus assembly into filaments and budding. Early in infection, localizes in the nucleus where it inhibits host cell transcription through direct binding to host chromatin. Later in infection, traffics to the cytoplasm through the action of host CRM1 to associate with inclusion bodies, the site of viral transcription and replication. During virus assembly and budding, acts as a bridge between the nucleocapsid and the lipid bilayer. Also plays a role in the inhibition of host interferon-beta response in a RACK1-dependent manner. This is Matrix protein (M) from Homo sapiens (Human).